Here is a 295-residue protein sequence, read N- to C-terminus: Lipase 2 (295 aa).

A signal peptide spans 1–31 (MPKPALRRVMTATVAAVGTLALGLTDATAHA). The active-site Nucleophile is the Ser-48. Cystine bridges form between Cys-65-Cys-89, Cys-138-Cys-152, and Cys-205-Cys-254. His-275 is an active-site residue.

This sequence belongs to the 'GDSL' lipolytic enzyme family. As to quaternary structure, monomer.

The protein localises to the secreted. It carries out the reaction a triacylglycerol + H2O = a diacylglycerol + a fatty acid + H(+). Its activity is regulated as follows. Strongly inhibited by Ag(+). The cations Ca(2+) and Mg(2+) do not significantly reduce the lipolytic activity of SCO7513, whereas high concentrations of Co(2+) and Cu(2+) partially inhibit it. Is not inhibited by DTT in vitro. Is resistant to PMSF inhibition, except in the presence of Ca(2+). Its function is as follows. Catalyzes the hydrolysis of fatty acid esters with a preference for long chain fatty acids (C16-C18). The sequence is that of Lipase 2 from Streptomyces coelicolor (strain ATCC BAA-471 / A3(2) / M145).